The primary structure comprises 809 residues: Endoplasmin homolog (809 aa).

The first 18 residues, 1-18 (MRKWALSCALLLVLLLTT), serve as a signal peptide directing secretion. ATP-binding residues include N111, D155, N168, and F200. Residue N111 is glycosylated (N-linked (GlcNAc...) asparagine). A compositionally biased stretch (acidic residues) spans 293–320 (VPADEEESNEEEESTTETTEEEETEDDE). A disordered region spans residues 293–329 (VPADEEESNEEEESTTETTEEEETEDDEEKKPKTKTV). N-linked (GlcNAc...) asparagine glycosylation is found at N410, N450, and N617. A disordered region spans residues 766 to 809 (SLDLSPDAAVEEEEEVEEPEVEEKESAKQEAEEPEHEQYDKDEL). Acidic residues predominate over residues 774-788 (AVEEEEEVEEPEVEE). The segment covering 789–809 (KESAKQEAEEPEHEQYDKDEL) has biased composition (basic and acidic residues). The Prevents secretion from ER signature appears at 806 to 809 (KDEL).

The protein belongs to the heat shock protein 90 family.

Its subcellular location is the endoplasmic reticulum lumen. In terms of biological role, may have a molecular chaperone role in the processing of secreted materials. This chain is Endoplasmin homolog, found in Hordeum vulgare (Barley).